Here is a 1363-residue protein sequence, read N- to C-terminus: DNA-directed RNA polymerase subunit beta' (1363 aa).

The interval 1–39 is disordered; it reads MTSTPSKSRKSSKGSKAAKAAASAPETRPLAKTPPPFRN. Positions 14 to 24 are enriched in low complexity; the sequence is GSKAAKAAASA. 4 residues coordinate Zn(2+): C248, C315, C322, and C325.

It belongs to the RNA polymerase beta' chain family. RpoC2 subfamily. In cyanobacteria the RNAP catalytic core is composed of 2 alpha, 1 beta, 1 beta', 1 gamma and 1 omega subunit. When a sigma factor is associated with the core the holoenzyme is formed, which can initiate transcription. It depends on Zn(2+) as a cofactor.

The enzyme catalyses RNA(n) + a ribonucleoside 5'-triphosphate = RNA(n+1) + diphosphate. Functionally, DNA-dependent RNA polymerase catalyzes the transcription of DNA into RNA using the four ribonucleoside triphosphates as substrates. The protein is DNA-directed RNA polymerase subunit beta' of Synechococcus sp. (strain WH7803).